The primary structure comprises 248 residues: 1-(5-phosphoribosyl)-5-[(5-phosphoribosylamino)methylideneamino] imidazole-4-carboxamide isomerase (248 aa).

Asp8 serves as the catalytic Proton acceptor. Asp131 (proton donor) is an active-site residue.

The protein belongs to the HisA/HisF family.

The protein localises to the cytoplasm. The catalysed reaction is 1-(5-phospho-beta-D-ribosyl)-5-[(5-phospho-beta-D-ribosylamino)methylideneamino]imidazole-4-carboxamide = 5-[(5-phospho-1-deoxy-D-ribulos-1-ylimino)methylamino]-1-(5-phospho-beta-D-ribosyl)imidazole-4-carboxamide. Its pathway is amino-acid biosynthesis; L-histidine biosynthesis; L-histidine from 5-phospho-alpha-D-ribose 1-diphosphate: step 4/9. The sequence is that of 1-(5-phosphoribosyl)-5-[(5-phosphoribosylamino)methylideneamino] imidazole-4-carboxamide isomerase from Paracidovorax citrulli (strain AAC00-1) (Acidovorax citrulli).